We begin with the raw amino-acid sequence, 254 residues long: MCSCLVVKNTVIGSGRTKIAVPLVARDAAELSAVLEQIKNMPFDIAEFRADFLECAGSIGEILHHTQTVRDALPDKPLLFTFRRHGEGGSFPCSDDYYFELLDALIESRLPDIIDIELFSGETAVRCAVANAQKNGIAALLCNHEFHRTPPQEEIVCRLKQMEDCGADICKIAVMPQSAEDVLTLLSATLKAKELAAKPIVTMSMGQTGAVSRLAGQVFGSSITFGSGTQNSAPGQIGVSALRATLDCLENGAD.

3-dehydroquinate-binding positions include 47–49 (EFR) and Arg83. Residue His144 is the Proton donor/acceptor of the active site. The Schiff-base intermediate with substrate role is filled by Lys171. Arg213, Ser232, and Gln236 together coordinate 3-dehydroquinate.

This sequence belongs to the type-I 3-dehydroquinase family. In terms of assembly, homodimer.

The enzyme catalyses 3-dehydroquinate = 3-dehydroshikimate + H2O. It functions in the pathway metabolic intermediate biosynthesis; chorismate biosynthesis; chorismate from D-erythrose 4-phosphate and phosphoenolpyruvate: step 3/7. Functionally, involved in the third step of the chorismate pathway, which leads to the biosynthesis of aromatic amino acids. Catalyzes the cis-dehydration of 3-dehydroquinate (DHQ) and introduces the first double bond of the aromatic ring to yield 3-dehydroshikimate. This Neisseria meningitidis serogroup B (strain ATCC BAA-335 / MC58) protein is 3-dehydroquinate dehydratase.